The chain runs to 149 residues: MEQTYVMVKPDGVQRGLVGEVISRIEKRGLKIVALRMNVIAEATAKEHYGEHAARPFFPSLIEFITSGPSVSMVVAGKDAIKVMRAINGATNPVDAAPGTIRGDFALDVGRNVVHASDSPEAAAREIAIHFKDSEIANYSRVDEVCLYE.

ATP contacts are provided by Lys9, Phe57, Arg85, Thr91, Arg102, and Asn112. His115 serves as the catalytic Pros-phosphohistidine intermediate.

Belongs to the NDK family. It depends on Mg(2+) as a cofactor.

It localises to the cytoplasm. It catalyses the reaction a 2'-deoxyribonucleoside 5'-diphosphate + ATP = a 2'-deoxyribonucleoside 5'-triphosphate + ADP. The enzyme catalyses a ribonucleoside 5'-diphosphate + ATP = a ribonucleoside 5'-triphosphate + ADP. In terms of biological role, major role in the synthesis of nucleoside triphosphates other than ATP. The ATP gamma phosphate is transferred to the NDP beta phosphate via a ping-pong mechanism, using a phosphorylated active-site intermediate. This is Nucleoside diphosphate kinase from Methanosarcina mazei (strain ATCC BAA-159 / DSM 3647 / Goe1 / Go1 / JCM 11833 / OCM 88) (Methanosarcina frisia).